Consider the following 500-residue polypeptide: Lysine--tRNA ligase (500 aa).

Mg(2+)-binding residues include Asp-412 and Glu-419.

It belongs to the class-II aminoacyl-tRNA synthetase family. In terms of assembly, homodimer. Mg(2+) serves as cofactor.

It is found in the cytoplasm. The enzyme catalyses tRNA(Lys) + L-lysine + ATP = L-lysyl-tRNA(Lys) + AMP + diphosphate. In Kineococcus radiotolerans (strain ATCC BAA-149 / DSM 14245 / SRS30216), this protein is Lysine--tRNA ligase.